The primary structure comprises 684 residues: Phenoloxidase 2 (684 aa).

Residues 1–51 constitute a propeptide, removed by PPAF1; the sequence is MSNTAVLNDLVALYDRPTEPMFRVKAKKSFKVPKEYVTDRFKNVAVEISNR. 2 N-linked (GlcNAc...) asparagine glycosylation sites follow: Asn-81 and Asn-91. The Cu cation site is built by His-209, His-213, and His-238. N-linked (GlcNAc...) asparagine glycosylation occurs at Asn-330. The active-site Proton acceptor is Glu-350. His-365, His-369, and His-405 together coordinate Cu cation. N-linked (GlcNAc...) asparagine glycosylation is found at Asn-416, Asn-487, Asn-491, and Asn-546. Cystine bridges form between Cys-581–Cys-623 and Cys-583–Cys-630.

Belongs to the tyrosinase family. As to quaternary structure, dimer. Might form a homodimer or a heterodimer with PPO1. Might interact with PPAF2 (via CLIP domain); the interaction might be required for PPO2 activity. Cu(2+) serves as cofactor. In terms of processing, precursor cleaved by PPAF1. Hemocytes.

It localises to the secreted. Functionally, this is a copper-containing oxidase that functions in the formation of pigments such as melanins and other polyphenolic compounds. Catalyzes the oxidation of o-diphenols (N-acetyldopamine, 4-methylcatechol and dopamine). Cannot oxidize monophenols and p-phenols (L-tyrosine, tyramine, gentisic acid and hydroquinone). Binds to the surface of hemocytes and is involved in hemocyte melanization. Activation of the enzyme in response to bacterial lipopolysaccharides (LPS) suggests it may play a role in innate immunity. The protein is Phenoloxidase 2 of Holotrichia diomphalia (Korean black chafer).